The following is a 162-amino-acid chain: Cyclic pyranopterin monophosphate synthase (162 aa).

Residues 75 to 77 (LCH) and 113 to 114 (ME) contribute to the substrate site. Asp128 is an active-site residue.

This sequence belongs to the MoaC family. Homohexamer; trimer of dimers.

It catalyses the reaction (8S)-3',8-cyclo-7,8-dihydroguanosine 5'-triphosphate = cyclic pyranopterin phosphate + diphosphate. Its pathway is cofactor biosynthesis; molybdopterin biosynthesis. Catalyzes the conversion of (8S)-3',8-cyclo-7,8-dihydroguanosine 5'-triphosphate to cyclic pyranopterin monophosphate (cPMP). This is Cyclic pyranopterin monophosphate synthase from Burkholderia vietnamiensis (strain G4 / LMG 22486) (Burkholderia cepacia (strain R1808)).